The following is a 585-amino-acid chain: Proline-rich protein 14 (585 aa).

Residue methionine 1 is modified to N-acetylmethionine. Positions methionine 1–proline 135 are sufficient for heterochromatin association in interphase and chromatin association in anaphase. Disordered regions lie at residues alanine 23–lysine 46, threonine 73–glutamine 150, and isoleucine 189–leucine 241. The required for the interaction with GRB2 and sufficient to promote the phosphorylation of AKT and cell proliferation stretch occupies residues proline 85–proline 378. Positions arginine 119–arginine 132 are enriched in basic residues. Residues glycine 136–glycine 365 form a required for nuclear lamina association region. A compositionally biased stretch (pro residues) spans proline 193 to glutamine 205. Position 277 is a phosphoserine (serine 277). Disordered stretches follow at residues glutamate 290–arginine 445 and aspartate 525–glycine 557. Positions leucine 337–arginine 356 are enriched in pro residues. Residues serine 393–serine 409 show a composition bias toward low complexity. The tract at residues arginine 518–serine 535 is required for nuclear localization.

In terms of assembly, interacts (via proline-rich region) with GRB2 (via SH3 domain 2). Interacts (via N-terminus) with CBX5.

The protein resides in the chromosome. It localises to the nucleus. Its subcellular location is the nucleus lamina. It is found in the nucleoplasm. Its function is as follows. Functions in tethering peripheral heterochromatin to the nuclear lamina during interphase, possibly through the interaction with heterochromatin protein CBX5/HP1 alpha. Might play a role in reattaching heterochromatin to the nuclear lamina at mitotic exit. Promotes myoblast differentiation during skeletal myogenesis, possibly by stimulating transcription factor MyoD activity via binding to CBX5/HP1 alpha. Involved in the positive regulation of the PI3K-Akt-mTOR signaling pathway and in promoting cell proliferation, possibly via binding to GRB2. This Homo sapiens (Human) protein is Proline-rich protein 14 (PRR14).